A 353-amino-acid polypeptide reads, in one-letter code: Nif-specific regulatory protein (353 aa).

Residues Ile12–Thr240 form the Sigma-54 factor interaction domain. Residues Gly40–Glu47 and Ala103–Glu112 contribute to the ATP site. A DNA-binding region (H-T-H motif) is located at residues Gln325–Arg344.

As to quaternary structure, interacts with sigma-54.

Required for activation of most nif operons, which are directly involved in nitrogen fixation. This chain is Nif-specific regulatory protein (nifA), found in Rhizobium leguminosarum bv. trifolii.